A 316-amino-acid polypeptide reads, in one-letter code: Biotin synthase (316 aa).

A Radical SAM core domain is found at 36–264 (FDNRITLCAI…TATLRICGGR (229 aa)). C53, C57, and C60 together coordinate [4Fe-4S] cluster. Positions 129, 189, and 259 each coordinate [2Fe-2S] cluster.

The protein belongs to the radical SAM superfamily. Biotin synthase family. In terms of assembly, homodimer. Requires [4Fe-4S] cluster as cofactor. [2Fe-2S] cluster serves as cofactor.

It catalyses the reaction (4R,5S)-dethiobiotin + (sulfur carrier)-SH + 2 reduced [2Fe-2S]-[ferredoxin] + 2 S-adenosyl-L-methionine = (sulfur carrier)-H + biotin + 2 5'-deoxyadenosine + 2 L-methionine + 2 oxidized [2Fe-2S]-[ferredoxin]. It functions in the pathway cofactor biosynthesis; biotin biosynthesis; biotin from 7,8-diaminononanoate: step 2/2. Functionally, catalyzes the conversion of dethiobiotin (DTB) to biotin by the insertion of a sulfur atom into dethiobiotin via a radical-based mechanism. The sequence is that of Biotin synthase from Desulfovibrio desulfuricans (strain ATCC 27774 / DSM 6949 / MB).